A 436-amino-acid polypeptide reads, in one-letter code: Probable protein phosphatase 2C 15 (436 aa).

Positions 30-302 constitute a PPM-type phosphatase domain; sequence KAAKMEKPIV…DDTTCIVVDI (273 aa). Positions 78, 79, 254, and 293 each coordinate Mn(2+).

The protein belongs to the PP2C family. The cofactor is Mg(2+). It depends on Mn(2+) as a cofactor.

The enzyme catalyses O-phospho-L-seryl-[protein] + H2O = L-seryl-[protein] + phosphate. It carries out the reaction O-phospho-L-threonyl-[protein] + H2O = L-threonyl-[protein] + phosphate. This Arabidopsis thaliana (Mouse-ear cress) protein is Probable protein phosphatase 2C 15.